The sequence spans 1477 residues: FHA domain-containing protein PS1 (1477 aa).

Positions 64-115 constitute an FHA domain; sequence LVVGRHPDCDILLTHPSISRFHLEIRSISSRQKLFVTDLSSVHGTWVRDLRI. 7 disordered regions span residues 188 to 218, 588 to 644, 789 to 818, 832 to 911, 942 to 979, 1004 to 1030, and 1159 to 1225; these read ENTT…DEDT, LGKA…PKSF, PNSF…DSEF, LNQK…LIGS, ALAA…RDDV, IRTN…KQAL, and VEQE…IRSS. Positions 589 to 607 are enriched in basic and acidic residues; sequence GKADIRSHEENGESEDSRQ. The segment covering 832 to 849 has biased composition (polar residues); it reads LNQKRNGETKVSSRQASP. Low complexity predominate over residues 870 to 883; that stretch reads QSLCSSSQPPSESE. Polar residues-rich tracts occupy residues 885 to 897, 957 to 971, 1007 to 1018, and 1198 to 1212; these read NPAT…SGII, LSSS…QTPE, NKSQGKQKQTGR, and SSFQ…SSTA. Low complexity predominate over residues 1213 to 1225; it reads SARNNISRGIRSS.

Functionally, required for normal spindle orientation at male meiosis II and normal formation of tetrad of microspores. Not involved in female meiosis. The polypeptide is FHA domain-containing protein PS1 (Arabidopsis thaliana (Mouse-ear cress)).